A 619-amino-acid polypeptide reads, in one-letter code: Trihelix transcription factor GTL2 (619 aa).

2 disordered regions span residues 11–41 (HRFI…VSFS) and 62–100 (HHHH…HHHH). Pro residues predominate over residues 16-27 (SPPPPPPLPPHQ). The Myb-like 1 domain occupies 102-154 (PWCSDEVLALLRFRSTVENWFPEFTWEHTSRKLAEVGFKRSPQECKEKFEEEE). Residues 307–361 (VRNMIAQQEEMHKKLLEDMVKKEEEKIAREEAWKKQEIERVNKEVEIRAQEQAMA) adopt a coiled-coil conformation. Disordered regions lie at residues 382 to 414 (VVQN…SSLL) and 434 to 458 (STKT…DLGK). The segment covering 384-396 (QNPTSPSQDSSSL) has biased composition (polar residues). Positions 435–444 (TKTLKPKNQN) are enriched in low complexity. The segment covering 448–458 (PKSDDKSDLGK) has biased composition (basic and acidic residues). The 68-residue stretch at 459-526 (RWPKDEVLAL…RCKEKWENIN (68 aa)) folds into the Myb-like 2 domain. The short motif at 503–510 (SKKMLEIG) is the Nuclear localization signal element. The disordered stretch occupies residues 557–619 (SQPPTGTTAT…VQFSGFDLEF (63 aa)). The span at 561-574 (TGTTATTATTATSA) shows a compositional bias: low complexity. Residues 575–585 (RDLDTRPEENR) are compositionally biased toward basic and acidic residues.

The protein resides in the nucleus. Its function is as follows. Probable transcription factor that binds specific DNA sequence. The sequence is that of Trihelix transcription factor GTL2 from Arabidopsis thaliana (Mouse-ear cress).